The chain runs to 284 residues: 2-dehydro-3-deoxyphosphooctonate aldolase (284 aa).

It belongs to the KdsA family.

The protein localises to the cytoplasm. It carries out the reaction D-arabinose 5-phosphate + phosphoenolpyruvate + H2O = 3-deoxy-alpha-D-manno-2-octulosonate-8-phosphate + phosphate. It functions in the pathway carbohydrate biosynthesis; 3-deoxy-D-manno-octulosonate biosynthesis; 3-deoxy-D-manno-octulosonate from D-ribulose 5-phosphate: step 2/3. It participates in bacterial outer membrane biogenesis; lipopolysaccharide biosynthesis. This Glaesserella parasuis serovar 5 (strain SH0165) (Haemophilus parasuis) protein is 2-dehydro-3-deoxyphosphooctonate aldolase.